The chain runs to 757 residues: Dynamin-related protein DNM1 (757 aa).

Residues 25 to 333 (TLDLPILAVV…LLSHIRDKLP (309 aa)) form the Dynamin-type G domain. Residues 35–42 (GSQSSGKS) are G1 motif. Residue 35-42 (GSQSSGKS) coordinates GTP. The G2 motif stretch occupies residues 61-63 (VTR). The segment at 175–178 (DLPG) is G3 motif. Residues 175–179 (DLPGI) and 244–247 (TKLD) contribute to the GTP site. The tract at residues 244-247 (TKLD) is G4 motif. The tract at residues 274-277 (VNRS) is G5 motif. The segment at 557–597 (SKLSQQENGQTNGINGTSSISSNIDQDSAKNSDYDDDGIDA) is disordered. The segment covering 567-580 (TNGINGTSSISSNI) has biased composition (low complexity). Residue Ser-629 is modified to Phosphoserine. The GED domain occupies 670-757 (CELIKRLIVS…KAATLISNIL (88 aa)).

The protein belongs to the TRAFAC class dynamin-like GTPase superfamily. Dynamin/Fzo/YdjA family. In terms of assembly, interacts with FIS1 and MDV1.

The protein resides in the mitochondrion outer membrane. It carries out the reaction GTP + H2O = GDP + phosphate + H(+). Microtubule-associated force-producing protein that participates mitochondrial fission. Fission of mitochondria occurs in many cell types and constitutes an important step in mitochondria morphology, which is balanced between fusion and fission. Functions antagonistically with FZO1. This is Dynamin-related protein DNM1 (DNM1) from Saccharomyces cerevisiae (strain ATCC 204508 / S288c) (Baker's yeast).